A 342-amino-acid chain; its full sequence is Global transcription regulator FGP1 (342 aa).

A disordered region spans residues 91 to 113 (FSPGEKKRASKKPKKQAGVAKAY).

It belongs to the MIT1/WOR1 family.

The protein localises to the nucleus. Functionally, global transcriptional regulator of pathogenicity. Regulates many genes during growth in putrescine medium and during infection. Involved in the developmental processes of conidium formation and sexual reproduction and modulates a morphological change that accompanies mycotoxin production. In Gibberella zeae (strain ATCC MYA-4620 / CBS 123657 / FGSC 9075 / NRRL 31084 / PH-1) (Wheat head blight fungus), this protein is Global transcription regulator FGP1.